Here is a 348-residue protein sequence, read N- to C-terminus: 3-isopropylmalate dehydrogenase (348 aa).

Residue 76–87 participates in NAD(+) binding; that stretch reads GPKWTDPNNRPE. Substrate-binding residues include Arg-94, Arg-104, Arg-132, and Asp-217. Asp-217, Asp-241, and Asp-245 together coordinate Mg(2+). Residue 275–287 coordinates NAD(+); sequence GSAPDIAGKNVAN.

Belongs to the isocitrate and isopropylmalate dehydrogenases family. LeuB type 1 subfamily. As to quaternary structure, homodimer. It depends on Mg(2+) as a cofactor. Mn(2+) is required as a cofactor.

Its subcellular location is the cytoplasm. The catalysed reaction is (2R,3S)-3-isopropylmalate + NAD(+) = 4-methyl-2-oxopentanoate + CO2 + NADH. It participates in amino-acid biosynthesis; L-leucine biosynthesis; L-leucine from 3-methyl-2-oxobutanoate: step 3/4. Catalyzes the oxidation of 3-carboxy-2-hydroxy-4-methylpentanoate (3-isopropylmalate) to 3-carboxy-4-methyl-2-oxopentanoate. The product decarboxylates to 4-methyl-2 oxopentanoate. The polypeptide is 3-isopropylmalate dehydrogenase (Staphylococcus aureus (strain MW2)).